We begin with the raw amino-acid sequence, 1378 residues long: DNA-directed RNA polymerase subunit beta (1378 aa).

It belongs to the RNA polymerase beta chain family. The RNAP catalytic core consists of 2 alpha, 1 beta, 1 beta' and 1 omega subunit. When a sigma factor is associated with the core the holoenzyme is formed, which can initiate transcription.

It catalyses the reaction RNA(n) + a ribonucleoside 5'-triphosphate = RNA(n+1) + diphosphate. Its function is as follows. DNA-dependent RNA polymerase catalyzes the transcription of DNA into RNA using the four ribonucleoside triphosphates as substrates. The sequence is that of DNA-directed RNA polymerase subunit beta from Agrobacterium fabrum (strain C58 / ATCC 33970) (Agrobacterium tumefaciens (strain C58)).